The primary structure comprises 533 residues: Probable bifunctional tRNA threonylcarbamoyladenosine biosynthesis protein (533 aa).

The kae1 stretch occupies residues 1–328 (MRILGIEGTA…FRPDAVTVTW (328 aa)). Fe cation is bound by residues His112 and His116. Residues 133–137 (NASGA), Asp165, Gly178, Glu182, and Asn261 contribute to the L-threonylcarbamoyladenylate site. A Fe cation-binding site is contributed by Asp289. One can recognise a Protein kinase domain in the interval 339-533 (PATLDKTPVR…RDIESRGRYH (195 aa)). ATP contacts are provided by residues 347-354 (VRGAEAIV) and Lys363. Asp452 acts as the Proton acceptor; for kinase activity in catalysis.

It in the N-terminal section; belongs to the KAE1 / TsaD family. This sequence in the C-terminal section; belongs to the protein kinase superfamily. Tyr protein kinase family. BUD32 subfamily. Component of the KEOPS complex that consists of Kae1, Bud32, Cgi121 and Pcc1; the whole complex dimerizes. It depends on Fe(2+) as a cofactor.

It is found in the cytoplasm. It carries out the reaction L-seryl-[protein] + ATP = O-phospho-L-seryl-[protein] + ADP + H(+). It catalyses the reaction L-threonyl-[protein] + ATP = O-phospho-L-threonyl-[protein] + ADP + H(+). The catalysed reaction is L-threonylcarbamoyladenylate + adenosine(37) in tRNA = N(6)-L-threonylcarbamoyladenosine(37) in tRNA + AMP + H(+). Functionally, required for the formation of a threonylcarbamoyl group on adenosine at position 37 (t(6)A37) in tRNAs that read codons beginning with adenine. Is a component of the KEOPS complex that is probably involved in the transfer of the threonylcarbamoyl moiety of threonylcarbamoyl-AMP (TC-AMP) to the N6 group of A37. The Kae1 domain likely plays a direct catalytic role in this reaction. The Bud32 domain probably displays kinase activity that regulates Kae1 function. This chain is Probable bifunctional tRNA threonylcarbamoyladenosine biosynthesis protein, found in Haloquadratum walsbyi (strain DSM 16790 / HBSQ001).